The primary structure comprises 141 residues: Large ribosomal subunit protein bL17 (141 aa).

The protein belongs to the bacterial ribosomal protein bL17 family. As to quaternary structure, part of the 50S ribosomal subunit. Contacts protein L32.

This Bartonella bacilliformis (strain ATCC 35685 / KC583 / Herrer 020/F12,63) protein is Large ribosomal subunit protein bL17.